Here is a 589-residue protein sequence, read N- to C-terminus: C-type lectin domain family 4 member F (589 aa).

The Cytoplasmic segment spans residues 1–39 (MDGEAVRFCTDNQCVSLHPQEVDSVAMAPAAPKIPRLVQ). Residues 40–60 (ATPAFMAVTLVFSLVTLFVVV) traverse the membrane as a helical; Signal-anchor for type II membrane protein segment. Topologically, residues 61 to 589 (QQQTRPVPKP…TPPCPWILSN (529 aa)) are extracellular. Residues Asn79, Asn113, Asn207, Asn230, Asn244, Asn312, Asn385, and Asn399 are each glycosylated (N-linked (GlcNAc...) asparagine). Residues 476 to 589 (NGGSLYYFSS…TPPCPWILSN (114 aa)) enclose the C-type lectin domain.

Its subcellular location is the membrane. Functionally, receptor with an affinity for galactose and fucose. Could be involved in endocytosis. This chain is C-type lectin domain family 4 member F (CLEC4F), found in Homo sapiens (Human).